The primary structure comprises 410 residues: Multifunctional CCA protein (410 aa).

The ATP site is built by Gly-8 and Arg-11. Residues Gly-8 and Arg-11 each coordinate CTP. 2 residues coordinate Mg(2+): Glu-21 and Asp-23. ATP is bound by residues Arg-91, Arg-137, and Arg-140. Positions 91, 137, and 140 each coordinate CTP. Residues 228–329 (TGIHVMMALR…LKLFDRLDVW (102 aa)) enclose the HD domain.

The protein belongs to the tRNA nucleotidyltransferase/poly(A) polymerase family. Bacterial CCA-adding enzyme type 1 subfamily. As to quaternary structure, monomer. Can also form homodimers and oligomers. Requires Mg(2+) as cofactor. Ni(2+) is required as a cofactor.

The catalysed reaction is a tRNA precursor + 2 CTP + ATP = a tRNA with a 3' CCA end + 3 diphosphate. It catalyses the reaction a tRNA with a 3' CCA end + 2 CTP + ATP = a tRNA with a 3' CCACCA end + 3 diphosphate. Its function is as follows. Catalyzes the addition and repair of the essential 3'-terminal CCA sequence in tRNAs without using a nucleic acid template. Adds these three nucleotides in the order of C, C, and A to the tRNA nucleotide-73, using CTP and ATP as substrates and producing inorganic pyrophosphate. tRNA 3'-terminal CCA addition is required both for tRNA processing and repair. Also involved in tRNA surveillance by mediating tandem CCA addition to generate a CCACCA at the 3' terminus of unstable tRNAs. While stable tRNAs receive only 3'-terminal CCA, unstable tRNAs are marked with CCACCA and rapidly degraded. The chain is Multifunctional CCA protein from Tolumonas auensis (strain DSM 9187 / NBRC 110442 / TA 4).